Reading from the N-terminus, the 278-residue chain is Large ribosomal subunit protein uL2 (278 aa).

The interval 223–278 (GSVMNPNDHPHGGGEGKAPIGHPSPMSPWGKKTLGKKTRDHKAKSEKFIVRHRRAK) is disordered. A compositionally biased stretch (basic residues) spans 255–264 (TLGKKTRDHK).

This sequence belongs to the universal ribosomal protein uL2 family. Part of the 50S ribosomal subunit. Forms a bridge to the 30S subunit in the 70S ribosome.

In terms of biological role, one of the primary rRNA binding proteins. Required for association of the 30S and 50S subunits to form the 70S ribosome, for tRNA binding and peptide bond formation. It has been suggested to have peptidyltransferase activity; this is somewhat controversial. Makes several contacts with the 16S rRNA in the 70S ribosome. This Lacticaseibacillus paracasei (strain ATCC 334 / BCRC 17002 / CCUG 31169 / CIP 107868 / KCTC 3260 / NRRL B-441) (Lactobacillus paracasei) protein is Large ribosomal subunit protein uL2.